A 364-amino-acid chain; its full sequence is Putative methylthioribose-1-phosphate isomerase (364 aa).

Residues 57–59, Arg-100, and Gln-206 contribute to the substrate site; that span reads RGA. The Proton donor role is filled by Asp-247. 257 to 258 is a binding site for substrate; that stretch reads NK.

The protein belongs to the eIF-2B alpha/beta/delta subunits family. MtnA subfamily.

It carries out the reaction 5-(methylsulfanyl)-alpha-D-ribose 1-phosphate = 5-(methylsulfanyl)-D-ribulose 1-phosphate. Its function is as follows. Catalyzes the interconversion of methylthioribose-1-phosphate (MTR-1-P) into methylthioribulose-1-phosphate (MTRu-1-P). This is Putative methylthioribose-1-phosphate isomerase from Pyrococcus horikoshii (strain ATCC 700860 / DSM 12428 / JCM 9974 / NBRC 100139 / OT-3).